The following is a 325-amino-acid chain: Beta-ketoacyl-[acyl-carrier-protein] synthase III (325 aa).

Catalysis depends on residues C116 and H252. The segment at 253-257 (QANLR) is ACP-binding. The active site involves N282.

This sequence belongs to the thiolase-like superfamily. FabH family. Homodimer.

The protein resides in the cytoplasm. It carries out the reaction malonyl-[ACP] + acetyl-CoA + H(+) = 3-oxobutanoyl-[ACP] + CO2 + CoA. The protein operates within lipid metabolism; fatty acid biosynthesis. Catalyzes the condensation reaction of fatty acid synthesis by the addition to an acyl acceptor of two carbons from malonyl-ACP. Catalyzes the first condensation reaction which initiates fatty acid synthesis and may therefore play a role in governing the total rate of fatty acid production. Possesses both acetoacetyl-ACP synthase and acetyl transacylase activities. Its substrate specificity determines the biosynthesis of branched-chain and/or straight-chain of fatty acids. This is Beta-ketoacyl-[acyl-carrier-protein] synthase III from Xanthomonas campestris pv. campestris (strain ATCC 33913 / DSM 3586 / NCPPB 528 / LMG 568 / P 25).